A 259-amino-acid polypeptide reads, in one-letter code: Thiazole synthase (259 aa).

The active-site Schiff-base intermediate with DXP is K95. 1-deoxy-D-xylulose 5-phosphate is bound by residues G156, 183–184 (AG), and 205–206 (NS).

Belongs to the ThiG family. As to quaternary structure, homotetramer. Forms heterodimers with either ThiH or ThiS.

Its subcellular location is the cytoplasm. It carries out the reaction [ThiS sulfur-carrier protein]-C-terminal-Gly-aminoethanethioate + 2-iminoacetate + 1-deoxy-D-xylulose 5-phosphate = [ThiS sulfur-carrier protein]-C-terminal Gly-Gly + 2-[(2R,5Z)-2-carboxy-4-methylthiazol-5(2H)-ylidene]ethyl phosphate + 2 H2O + H(+). It participates in cofactor biosynthesis; thiamine diphosphate biosynthesis. Catalyzes the rearrangement of 1-deoxy-D-xylulose 5-phosphate (DXP) to produce the thiazole phosphate moiety of thiamine. Sulfur is provided by the thiocarboxylate moiety of the carrier protein ThiS. In vitro, sulfur can be provided by H(2)S. The protein is Thiazole synthase of Coxiella burnetii (strain RSA 331 / Henzerling II).